A 383-amino-acid polypeptide reads, in one-letter code: UDP-N-acetylglucosamine--N-acetylmuramyl-(pentapeptide) pyrophosphoryl-undecaprenol N-acetylglucosamine transferase (383 aa).

Residues Thr11–Gly13, Asn125, Arg166, Ser191, Ile246, and Gln291 each bind UDP-N-acetyl-alpha-D-glucosamine. The segment at Pro364–Ser383 is disordered. Residues Gly366 to Ser383 are compositionally biased toward basic and acidic residues.

The protein belongs to the glycosyltransferase 28 family. MurG subfamily.

It is found in the cell inner membrane. It carries out the reaction di-trans,octa-cis-undecaprenyl diphospho-N-acetyl-alpha-D-muramoyl-L-alanyl-D-glutamyl-meso-2,6-diaminopimeloyl-D-alanyl-D-alanine + UDP-N-acetyl-alpha-D-glucosamine = di-trans,octa-cis-undecaprenyl diphospho-[N-acetyl-alpha-D-glucosaminyl-(1-&gt;4)]-N-acetyl-alpha-D-muramoyl-L-alanyl-D-glutamyl-meso-2,6-diaminopimeloyl-D-alanyl-D-alanine + UDP + H(+). It participates in cell wall biogenesis; peptidoglycan biosynthesis. Its function is as follows. Cell wall formation. Catalyzes the transfer of a GlcNAc subunit on undecaprenyl-pyrophosphoryl-MurNAc-pentapeptide (lipid intermediate I) to form undecaprenyl-pyrophosphoryl-MurNAc-(pentapeptide)GlcNAc (lipid intermediate II). This is UDP-N-acetylglucosamine--N-acetylmuramyl-(pentapeptide) pyrophosphoryl-undecaprenol N-acetylglucosamine transferase from Myxococcus xanthus (strain DK1622).